An 881-amino-acid chain; its full sequence is Protein P (881 aa).

The tract at residues 1–184 is terminal protein domain (TP); the sequence is MHPFYQLFRN…GKPYSWEHRQ (184 aa). The interval 185 to 384 is spacer; sequence LEQHNGQQHK…YCLHHIVSSI (200 aa). Residues 263–351 are disordered; sequence IPCESKAPSE…PAGICRGTES (89 aa). Composition is skewed to polar residues over residues 270–279 and 287–314; these read PSEQQQSSLR and NQIQ…IQSG. Positions 326–340 are enriched in basic and acidic residues; the sequence is FERHTPSFDNEKSDR. Residues 385-726 are polymerase/reverse transcriptase domain (RT); that stretch reads DDWGPCTFDG…YGELWPVARQ (342 aa). The region spanning 395 to 636 is the Reverse transcriptase domain; that stretch reads DVTIRSPRTP…HTLHFMGYTI (242 aa). Residues D467, D587, and D588 each contribute to the Mg(2+) site.

It belongs to the hepadnaviridae P protein family.

The enzyme catalyses DNA(n) + a 2'-deoxyribonucleoside 5'-triphosphate = DNA(n+1) + diphosphate. It carries out the reaction Endonucleolytic cleavage to 5'-phosphomonoester.. With respect to regulation, activated by host HSP70 and HSP40 in vitro to be able to bind the epsilon loop of the pgRNA. Because deletion of the RNase H region renders the protein partly chaperone-independent, the chaperones may be needed indirectly to relieve occlusion of the RNA-binding site by this domain. Inhibited by several reverse-transcriptase inhibitors: Lamivudine, Adefovir and Entecavir. In terms of biological role, multifunctional enzyme that converts the viral RNA genome into dsDNA in viral cytoplasmic capsids. This enzyme displays a DNA polymerase activity that can copy either DNA or RNA templates, and a ribonuclease H (RNase H) activity that cleaves the RNA strand of RNA-DNA heteroduplexes in a partially processive 3'- to 5'-endonucleasic mode. Neo-synthesized pregenomic RNA (pgRNA) are encapsidated together with the P protein, and reverse-transcribed inside the nucleocapsid. Initiation of reverse-transcription occurs first by binding the epsilon loop on the pgRNA genome, and is initiated by protein priming, thereby the 5'-end of (-)DNA is covalently linked to P protein. Partial (+)DNA is synthesized from the (-)DNA template and generates the relaxed circular DNA (RC-DNA) genome. After budding and infection, the RC-DNA migrates in the nucleus, and is converted into a plasmid-like covalently closed circular DNA (cccDNA). The activity of P protein does not seem to be necessary for cccDNA generation, and is presumably released from (+)DNA by host nuclear DNA repair machinery. This chain is Protein P, found in Ground squirrel hepatitis virus (strain 27) (GSHV).